An 81-amino-acid polypeptide reads, in one-letter code: Photosystem I iron-sulfur center (81 aa).

2 4Fe-4S ferredoxin-type domains span residues 2–31 and 39–68; these read SHSV…MVPW and IASS…IRVY. 8 residues coordinate [4Fe-4S] cluster: Cys11, Cys14, Cys17, Cys21, Cys48, Cys51, Cys54, and Cys58.

As to quaternary structure, the cyanobacterial PSI reaction center is composed of one copy each of PsaA,B,C,D,E,F,I,J,K,L,M and X, and forms trimeric complexes. It depends on [4Fe-4S] cluster as a cofactor.

The protein resides in the cellular thylakoid membrane. It catalyses the reaction reduced [plastocyanin] + hnu + oxidized [2Fe-2S]-[ferredoxin] = oxidized [plastocyanin] + reduced [2Fe-2S]-[ferredoxin]. In terms of biological role, apoprotein for the two 4Fe-4S centers FA and FB of photosystem I (PSI); essential for photochemical activity. FB is the terminal electron acceptor of PSI, donating electrons to ferredoxin. The C-terminus interacts with PsaA/B/D and helps assemble the protein into the PSI complex. Required for binding of PsaD and PsaE to PSI. PSI is a plastocyanin/cytochrome c6-ferredoxin oxidoreductase, converting photonic excitation into a charge separation, which transfers an electron from the donor P700 chlorophyll pair to the spectroscopically characterized acceptors A0, A1, FX, FA and FB in turn. Mutant proteins with a 3Fe-4S center are unable to reconstitute PSI activity in vivo. This chain is Photosystem I iron-sulfur center, found in Synechocystis sp. (strain ATCC 27184 / PCC 6803 / Kazusa).